We begin with the raw amino-acid sequence, 583 residues long: Aspartate--tRNA ligase (583 aa).

L-aspartate is bound at residue E174. The segment at 198–201 (QITK) is aspartate. Residue R220 coordinates L-aspartate. ATP is bound by residues 220–222 (RDE) and Q229. An L-aspartate-binding site is contributed by H443. E477 is a binding site for ATP. Position 484 (R484) interacts with L-aspartate. An ATP-binding site is contributed by 529 to 532 (GLDR).

Belongs to the class-II aminoacyl-tRNA synthetase family. Type 1 subfamily. As to quaternary structure, homodimer.

The protein localises to the cytoplasm. It carries out the reaction tRNA(Asp) + L-aspartate + ATP = L-aspartyl-tRNA(Asp) + AMP + diphosphate. Catalyzes the attachment of L-aspartate to tRNA(Asp) in a two-step reaction: L-aspartate is first activated by ATP to form Asp-AMP and then transferred to the acceptor end of tRNA(Asp). The chain is Aspartate--tRNA ligase from Streptococcus thermophilus (strain ATCC BAA-250 / LMG 18311).